Here is a 69-residue protein sequence, read N- to C-terminus: Large ribosomal subunit protein eL38z/eL38y (69 aa).

This sequence belongs to the eukaryotic ribosomal protein eL38 family.

The polypeptide is Large ribosomal subunit protein eL38z/eL38y (RPL38A) (Arabidopsis thaliana (Mouse-ear cress)).